The chain runs to 98 residues: Small ribosomal subunit protein uS19c (98 aa).

This sequence belongs to the universal ribosomal protein uS19 family.

It is found in the plastid. It localises to the chloroplast. In terms of biological role, protein S19 forms a complex with S13 that binds strongly to the 16S ribosomal RNA. The polypeptide is Small ribosomal subunit protein uS19c (Jasminum nudiflorum (Winter jasmine)).